Consider the following 77-residue polypeptide: Acyl carrier protein (77 aa).

The 76-residue stretch at 2 to 77 (SDVADRVKKI…DAVKFISEAS (76 aa)) folds into the Carrier domain. Ser-37 carries the post-translational modification O-(pantetheine 4'-phosphoryl)serine.

This sequence belongs to the acyl carrier protein (ACP) family. In terms of processing, 4'-phosphopantetheine is transferred from CoA to a specific serine of apo-ACP by AcpS. This modification is essential for activity because fatty acids are bound in thioester linkage to the sulfhydryl of the prosthetic group.

It localises to the cytoplasm. It participates in lipid metabolism; fatty acid biosynthesis. Carrier of the growing fatty acid chain in fatty acid biosynthesis. This Ruegeria pomeroyi (strain ATCC 700808 / DSM 15171 / DSS-3) (Silicibacter pomeroyi) protein is Acyl carrier protein.